The chain runs to 971 residues: MELSDANLQTPTEYLKKTLDPDPAIRRPAEKFLESVEGNQNYPLLLLTLLEKSQDNVIKVCASVTFKNYIKRNWRIVEDEPNKICEADRVAIKANIVHLMLSSPEQIQKQLSDAISIIGREDFPQKWPDLLTEMVNRFQSGDFHVINGVLRTAHSLFKRYRHEFKSNELWTETKLVLDAFALPLTNLFKATIELCSTHANDASALRILFSSLILISKLFYSLNFQDLPEFFEDNMETWMNNFHTLLTLDNKLLQTDDEEEAGLLELLKSQICDNAALYAQKYDEEFQRYLPRFVTAIWNLLVTTGQEVKYDLLVSNAIQFLASVCERPHYKNLFEDQNTLTSICEKVIVPNMEFRAADEEAFEDNSEEYIRRDLEGSDIDTRRRAACDLVRGLCKFFEGPVTGIFSGYVNSMLQEYAKNPSVNWKHKDAAIYLVTSLASKAQTQKHGITQANELVNLTEFFVNHILPDLKSANVNEFPVLKADGIKYIMIFRNQVPKEHLLVSIPLLINHLQAESIVVHTYAAHALERLFTMRGPNNATLFTAAEIAPFVEILLTNLFKALTLPGSSENEYIMKAIMRSFSLLQEAIIPYIPTLITQLTQKLLAVSKNPSKPHFNHYMSEAICLSIRITCKANPAAVVNFEEALFLVFTEILQNDVQEFIPYVFQVMSLLLETHKNDIPSSYMALFPHLLQPVLWERTGNIPALVRLLQAFLERGSNTIASAAADKIPGLLGVFQKLIASKANDHQGFYLLNSIIEHMPPESVDQYRKQIFILLFQRLQNSKTTKFIKSFLVFINLYCIKYGALALQEIFDGIQPKMFGMVLEKIIIPEIQKVSGNVEKKICAVGITKLLTECPPMMDTEYTKLWTPLLQSLIGLFELPEDDTIPDEEHFIDIEDTPGYQTAFSQLAFAGKKEHDPVGQMVNNPKIHLAQSLHKLSTACPGRVPSMVSTSLNAEALQYLQGYLQAASVTLL.

Met1 carries the post-translational modification N-acetylmethionine. The region spanning 29–102 (AEKFLESVEG…KANIVHLMLS (74 aa)) is the Importin N-terminal domain. Residue Ser112 is modified to Phosphoserine. An N6-acetyllysine mark is found at Lys574 and Lys824. Position 931 is a phosphoserine (Ser931).

It belongs to the XPO2/CSE1 family. As to quaternary structure, found in a complex with CSE1L/XPO2, Ran and KPNA2. Binds with high affinity to importin-alpha only in the presence of RanGTP. The complex is dissociated by the combined action of RanBP1 and RanGAP1. Interacts with CFTR.

The protein resides in the cytoplasm. The protein localises to the nucleus. Export receptor for importin-alpha. Mediates importin-alpha re-export from the nucleus to the cytoplasm after import substrates (cargos) have been released into the nucleoplasm. In the nucleus binds cooperatively to importin-alpha and to the GTPase Ran in its active GTP-bound form. Docking of this trimeric complex to the nuclear pore complex (NPC) is mediated through binding to nucleoporins. Upon transit of a nuclear export complex into the cytoplasm, disassembling of the complex and hydrolysis of Ran-GTP to Ran-GDP (induced by RANBP1 and RANGAP1, respectively) cause release of the importin-alpha from the export receptor. CSE1L/XPO2 then return to the nuclear compartment and mediate another round of transport. The directionality of nuclear export is thought to be conferred by an asymmetric distribution of the GTP- and GDP-bound forms of Ran between the cytoplasm and nucleus. This is Exportin-2 (CSE1L) from Pongo abelii (Sumatran orangutan).